The sequence spans 321 residues: Fe-S cluster assembly protein DRE2 (321 aa).

Residues 1-161 (MPAPVPPTAF…STPVTLSGAR (161 aa)) form an N-terminal SAM-like domain region. The tract at residues 123–168 (PSPSTLAYTSPSAPSLPTVASDPSPAPSSSTPVTLSGARPLQLRRN) is disordered. Low complexity predominate over residues 139–156 (PTVASDPSPAPSSSTPVT). The segment at 162 to 197 (PLQLRRNGDKARKAALWAIDSPLIPDGGKSLLTPAD) is linker. Residues Cys-203, Cys-219, Cys-222, and Cys-224 each contribute to the [2Fe-2S] cluster site. A fe-S binding site A region spans residues 203–224 (CVFPAENGKPVKRRRACKDCTC). [4Fe-4S] cluster contacts are provided by Cys-285, Cys-288, Cys-296, and Cys-299. 2 consecutive short sequence motifs (cx2C motif) follow at residues 285 to 288 (CGSC) and 296 to 299 (CSSC). Residues 285–299 (CGSCYLGDAFRCSSC) are fe-S binding site B.

This sequence belongs to the anamorsin family. Monomer. Interacts with TAH18. Interacts with MIA40. It depends on [2Fe-2S] cluster as a cofactor. [4Fe-4S] cluster serves as cofactor.

It is found in the cytoplasm. Its subcellular location is the mitochondrion intermembrane space. In terms of biological role, component of the cytosolic iron-sulfur (Fe-S) protein assembly (CIA) machinery required for the maturation of extramitochondrial Fe-S proteins. Part of an electron transfer chain functioning in an early step of cytosolic Fe-S biogenesis, facilitating the de novo assembly of a [4Fe-4S] cluster on the scaffold complex CFD1-NBP35. Electrons are transferred to DRE2 from NADPH via the FAD- and FMN-containing protein TAH18. TAH18-DRE2 are also required for the assembly of the diferric tyrosyl radical cofactor of ribonucleotide reductase (RNR), probably by providing electrons for reduction during radical cofactor maturation in the catalytic small subunit RNR2. The sequence is that of Fe-S cluster assembly protein DRE2 from Cryptococcus neoformans var. neoformans serotype D (strain B-3501A) (Filobasidiella neoformans).